Reading from the N-terminus, the 245-residue chain is Small ribosomal subunit protein uS2 (245 aa).

The protein belongs to the universal ribosomal protein uS2 family.

The chain is Small ribosomal subunit protein uS2 from Dehalococcoides mccartyi (strain ATCC BAA-2266 / KCTC 15142 / 195) (Dehalococcoides ethenogenes (strain 195)).